A 515-amino-acid chain; its full sequence is Maturase K (515 aa).

The protein belongs to the intron maturase 2 family. MatK subfamily.

The protein localises to the plastid. Its subcellular location is the chloroplast. Functionally, usually encoded in the trnK tRNA gene intron. Probably assists in splicing its own and other chloroplast group II introns. This is Maturase K from Alpinia zerumbet (Shell ginger).